We begin with the raw amino-acid sequence, 391 residues long: Ferrochelatase (391 aa).

Positions 196 and 281 each coordinate Fe cation.

Belongs to the ferrochelatase family.

The protein resides in the cytoplasm. It catalyses the reaction heme b + 2 H(+) = protoporphyrin IX + Fe(2+). The protein operates within porphyrin-containing compound metabolism; protoheme biosynthesis; protoheme from protoporphyrin-IX: step 1/1. Catalyzes the ferrous insertion into protoporphyrin IX. In Synechococcus sp. (strain CC9605), this protein is Ferrochelatase.